Here is a 488-residue protein sequence, read N- to C-terminus: Lysine--tRNA ligase (488 aa).

Mg(2+) contacts are provided by glutamate 398 and glutamate 405.

This sequence belongs to the class-II aminoacyl-tRNA synthetase family. Homodimer. Mg(2+) serves as cofactor.

The protein localises to the cytoplasm. The enzyme catalyses tRNA(Lys) + L-lysine + ATP = L-lysyl-tRNA(Lys) + AMP + diphosphate. This is Lysine--tRNA ligase from Carboxydothermus hydrogenoformans (strain ATCC BAA-161 / DSM 6008 / Z-2901).